The primary structure comprises 212 residues: Cytochrome c biogenesis ATP-binding export protein CcmA (212 aa).

The ABC transporter domain occupies Leu-7–Tyr-209. Gly-39–Thr-46 contributes to the ATP binding site.

It belongs to the ABC transporter superfamily. CcmA exporter (TC 3.A.1.107) family. In terms of assembly, the complex is composed of two ATP-binding proteins (CcmA) and two transmembrane proteins (CcmB).

The protein localises to the cell inner membrane. The catalysed reaction is heme b(in) + ATP + H2O = heme b(out) + ADP + phosphate + H(+). Part of the ABC transporter complex CcmAB involved in the biogenesis of c-type cytochromes; once thought to export heme, this seems not to be the case, but its exact role is uncertain. Responsible for energy coupling to the transport system. This Haemophilus influenzae (strain ATCC 51907 / DSM 11121 / KW20 / Rd) protein is Cytochrome c biogenesis ATP-binding export protein CcmA.